Here is a 363-residue protein sequence, read N- to C-terminus: dTDP-3-amino-3,6-dideoxy-alpha-D-galactopyranose transaminase (363 aa).

The residue at position 185 (K185) is an N6-(pyridoxal phosphate)lysine.

It belongs to the DegT/DnrJ/EryC1 family. Pyridoxal 5'-phosphate serves as cofactor.

It catalyses the reaction dTDP-3-amino-3,6-dideoxy-alpha-D-galactopyranose + 2-oxoglutarate = dTDP-3-dehydro-6-deoxy-alpha-D-galactose + L-glutamate. Functionally, specifically aminates dTDP-6-deoxy-D-xylohex-3-ulose to form dTDP-D-Fucp3N in the biosynthesis of dTDP-3-acetamido-3,6-dideoxy-alpha-D-galactose, a glycan chain of the S-layer. This chain is dTDP-3-amino-3,6-dideoxy-alpha-D-galactopyranose transaminase (fdtB), found in Aneurinibacillus thermoaerophilus.